Consider the following 443-residue polypeptide: MALSSTFLNPLVSSVAVNPQPKITSGKGFRVNCLIRTQQTVIKTDTKENAAVLTPGKRVEKEPSVSTVLANYHADWDPFEATSTPIYQSATFRMKNATEYNEYYYSRVANPTTSTLEKIIAEIENAEYVTCFTSGMSALTAVCELVNPGDEILTVEDIYGGSYGFIENLMVRKAGITVKRVDTSNIENVKAAMTNKTKLVWLESPSNPQLKISDIREIARIAHAYGAIVFIDNCIMSPLLSHPLELGADIVMHSATKFIAGNSSCMAGSLATNNKELADKLLSYRSATGCGLSPQDAWICLEGIKTLPLRVEEKQKNALTVANYLDNNPKITKVNYPGLPDNPGYDLHKSQSKGPGSVMSCETGSLPLSKQIVEDTKFFSKIVGFGGVGSAICLPWYTSHKAIPEPEKIRMGITKDLIRISVGIEDVQDLIQDLDNAMSTPTF.

The N-terminal 43 residues, 1 to 43, are a transit peptide targeting the chloroplast; it reads MALSSTFLNPLVSSVAVNPQPKITSGKGFRVNCLIRTQQTVIK. Pyridoxal 5'-phosphate-binding residues include tyrosine 105, arginine 107, glycine 135, methionine 136, serine 254, and threonine 256. At lysine 257 the chain carries N6-(pyridoxal phosphate)lysine.

Belongs to the trans-sulfuration enzymes family. Forms homodimers. May form homotetramers from two homodimers. Pyridoxal 5'-phosphate is required as a cofactor.

Its subcellular location is the plastid. It localises to the chloroplast. It catalyses the reaction L-mimosine + H2O = 3-hydroxy-4H-pyrid-4-one + pyruvate + NH4(+). Catalyzes the degradation of mimosine, which is a toxic secondary metabolite found in all Leucaena and Mimosa species. This Leucaena leucocephala (White popinac) protein is Mimosinase, chloroplastic.